Consider the following 193-residue polypeptide: Probable DNA-directed RNA polymerase subunit delta (193 aa).

The region spanning 14–83 (LSMIEVARAI…GENKWGLRSW (70 aa)) is the HTH HARE-type domain. Acidic residues-rich tracts occupy residues 117–134 (GDDD…DEDN) and 142–193 (EYDD…VVDE). The tract at residues 117-193 (GDDDAIDYGH…EYSDEEVVDE (77 aa)) is disordered.

It belongs to the RpoE family. In terms of assembly, RNAP is composed of a core of 2 alpha, a beta and a beta' subunits. The core is associated with a delta subunit and one of several sigma factors.

Functionally, participates in both the initiation and recycling phases of transcription. In the presence of the delta subunit, RNAP displays an increased specificity of transcription, a decreased affinity for nucleic acids, and an increased efficiency of RNA synthesis because of enhanced recycling. This chain is Probable DNA-directed RNA polymerase subunit delta, found in Streptococcus suis (strain 05ZYH33).